The following is a 66-amino-acid chain: Large ribosomal subunit protein uL29 (66 aa).

It belongs to the universal ribosomal protein uL29 family.

The sequence is that of Large ribosomal subunit protein uL29 from Hydrogenobaculum sp. (strain Y04AAS1).